Reading from the N-terminus, the 368-residue chain is 1-deoxy-D-xylulose 5-phosphate reductoisomerase (368 aa).

Positions 7, 8, 9, 10, 31, 32, 33, and 113 each coordinate NADPH. Lysine 114 contacts 1-deoxy-D-xylulose 5-phosphate. Position 115 (glutamate 115) interacts with NADPH. Residue aspartate 133 coordinates Mn(2+). Residues serine 134, glutamate 135, serine 158, and histidine 181 each contribute to the 1-deoxy-D-xylulose 5-phosphate site. A Mn(2+)-binding site is contributed by glutamate 135. Residue glycine 187 participates in NADPH binding. 1-deoxy-D-xylulose 5-phosphate is bound by residues serine 194, asparagine 199, lysine 200, and glutamate 203. Glutamate 203 is a Mn(2+) binding site.

This sequence belongs to the DXR family. The cofactor is Mg(2+). It depends on Mn(2+) as a cofactor.

It catalyses the reaction 2-C-methyl-D-erythritol 4-phosphate + NADP(+) = 1-deoxy-D-xylulose 5-phosphate + NADPH + H(+). It functions in the pathway isoprenoid biosynthesis; isopentenyl diphosphate biosynthesis via DXP pathway; isopentenyl diphosphate from 1-deoxy-D-xylulose 5-phosphate: step 1/6. In terms of biological role, catalyzes the NADPH-dependent rearrangement and reduction of 1-deoxy-D-xylulose-5-phosphate (DXP) to 2-C-methyl-D-erythritol 4-phosphate (MEP). The chain is 1-deoxy-D-xylulose 5-phosphate reductoisomerase from Helicobacter pylori (strain P12).